An 88-amino-acid polypeptide reads, in one-letter code: DNA-directed RNA polymerase subunit omega (88 aa).

Belongs to the RNA polymerase subunit omega family. In terms of assembly, the RNAP catalytic core consists of 2 alpha, 1 beta, 1 beta' and 1 omega subunit. When a sigma factor is associated with the core the holoenzyme is formed, which can initiate transcription.

The catalysed reaction is RNA(n) + a ribonucleoside 5'-triphosphate = RNA(n+1) + diphosphate. Promotes RNA polymerase assembly. Latches the N- and C-terminal regions of the beta' subunit thereby facilitating its interaction with the beta and alpha subunits. The protein is DNA-directed RNA polymerase subunit omega of Haemophilus influenzae (strain 86-028NP).